A 196-amino-acid chain; its full sequence is Agamous-like MADS-box protein AGL70 (196 aa).

Positions Met-1–Asp-61 constitute an MADS-box domain. The short motif at Ile-8 to Ser-15 is the Nuclear localization signal element. The region spanning Ala-80–Leu-170 is the K-box domain.

In terms of tissue distribution, mostly expressed in roots, leaves and flowers, and, to a lower extent, in inflorescence, siliques, pollen and shoots.

The protein resides in the nucleus. Functionally, probable transcription factor involved in the negative regulation of flowering time, probably through the photoperiodic and vernalization pathways; more efficient in cv. Landsberg erecta than in cv. Columbia background. Prevents premature flowering. Involved in the modulation of vernalization impact on flowering according to genotype acclimation to altitude. This is Agamous-like MADS-box protein AGL70 from Arabidopsis thaliana (Mouse-ear cress).